The primary structure comprises 694 residues: Polyribonucleotide nucleotidyltransferase (694 aa).

Positions 486 and 492 each coordinate Mg(2+). The 60-residue stretch at 553 to 612 (PRIETMQIKPTKIASVIGPGGKQIRQIIEETGVQIDVNDLGVVSISASSASAINKAKEII) folds into the KH domain. Residues 622 to 690 (GKTYRGRVTS…EKGQLKLSHK (69 aa)) form the S1 motif domain.

Belongs to the polyribonucleotide nucleotidyltransferase family. Requires Mg(2+) as cofactor.

It is found in the cytoplasm. It catalyses the reaction RNA(n+1) + phosphate = RNA(n) + a ribonucleoside 5'-diphosphate. Its function is as follows. Involved in mRNA degradation. Catalyzes the phosphorolysis of single-stranded polyribonucleotides processively in the 3'- to 5'-direction. The polypeptide is Polyribonucleotide nucleotidyltransferase (Chlamydia pneumoniae (Chlamydophila pneumoniae)).